Consider the following 313-residue polypeptide: Glucosyl-dolichyl phosphate glucuronosyltransferase (313 aa).

A helical transmembrane segment spans residues 284-304; that stretch reads LIAIFVFTAAVGFGYVYGLLT.

Belongs to the glycosyltransferase 2 family.

The protein localises to the cell membrane. It catalyses the reaction an archaeal dolichyl alpha-D-glucosyl phosphate + UDP-alpha-D-glucuronate = an archaeal dolichyl beta-D-glucuronosyl-(1-&gt;4)-alpha-D-glucosyl phosphate + UDP + H(+). The protein operates within cell surface structure biogenesis; S-layer biogenesis. Involved in the protein N-glycosylation pathway responsible for the assembly and attachment of an N-linked pentasaccharide that decorates the S-layer glycoprotein and flagellins. Catalyzes the transfer of a glucuronate residue (GlcA) to a glucose residue already bound to a dolichol phosphate (DolP), a compound that serves as a glycan lipid carrier in Archaea. In vitro, is able to add GlcA to DolP-Glc in which the omega-position isoprene is not saturated. However, the likely physiological lipid substrate is alpha,omega-saturated. This Haloferax volcanii (strain ATCC 29605 / DSM 3757 / JCM 8879 / NBRC 14742 / NCIMB 2012 / VKM B-1768 / DS2) (Halobacterium volcanii) protein is Glucosyl-dolichyl phosphate glucuronosyltransferase.